Reading from the N-terminus, the 1071-residue chain is MTTTNKDGPFRQQYLPGVHKEPNLAISESTHSSDWYSATSSEDCFQAASQSFSSQKSNGNVITQQPGKLHCEISDPKSCSFVPAISTDNAQMGTSGIIKYRSYSNPDLLVAMSPLAYRDEAPQSQKSVANSRQDLTQTSCEVVTVSETVVNADSITTTTVTSSTTTTATASQEDFIMVEAEQDETAGLCDATMPLVDKKNITTSSTTSSPSRQITPRIENGLSFENVVSLVKIFPAFVNKLLKKPWYASRCDEVCQFPKAELAYYDIVSTDVDDEHFVIVAGKVTTDEHLMDNQFHLVFAPVGFSEDVSLDERPFSLFRATDKKDLMDLLHLCDEKSFLFTSLDMSTMRADILRSKIEELVIQIRLKPHYHMIHVAIATDRLDFFSDGMIKTMNETLEPFESQLRCLCHTENCYPVHLALTMDRQKIVERLLELDPTLFCETDKAGNNVWHHVNSSFCAQIIWDRCPASQHFIDERNMDGQSPLNEAVSTAKPLVATFLIGKGAKFTRGDRNELFVAMTSKNAQSVVEVVLTDKPEIANERDALGNSAIHVALYKESLNALLNRKVELGLDIDVKNNAGETALLLFITTRKPDLLPLLVTLYAHGANMNATDPHGNTALHKSAALVDAKKISLECVKFLISAGSNPNKINLRGESPRHLAASLQNQEMLAILKAAGATRCPKGYKGCRSNCRHDCSSAEDEYEETLQKIRIGNESDYEKTEFTASEKLNIQDTLDGSRRGKKAKVNLISMDGGGIRGLVIIQTLIAIEERLGDDIFKYFDWSAGTSTGSLIMAGLATGKSLREMQQTYLLLKDRVFDGIMPPYDTVQLEKFIQDQFGTGTVWEIPYPRLMISAVNSEKLPVRLEMARNYKPAKDVAPETPKEMPLWMALRRSTAAPVLFKPSEDRYIDGGIISNNPALDLMSEVHAYNRELQLSGRKSDAVQMNVLVSFGTGQIPSTVIETLSIDSNSPLQSIKTIKNLAAMFIDQATASEGAPVARSRQWADSLEIPFFRFSAPLSKNIFLSSTSDLDVCTMMWDSFIYCRKHRDYIDELVKVLKHDTDHPHVKTPFTDL.

The interval 1–22 is disordered; that stretch reads MTTTNKDGPFRQQYLPGVHKEP. ANK repeat units follow at residues 411 to 440, 479 to 508, 510 to 539, 544 to 570, 578 to 610, 614 to 651, and 652 to 681; these read ENCY…TLFC, DGQS…KFTR, DRNE…EIAN, LGNS…ELGL, AGET…NMNA, HGNT…KINL, and RGES…TRCP. The PNPLA domain maps to 748–921; it reads ISMDGGGIRG…ISNNPALDLM (174 aa). Residues 752 to 757 carry the GXGXXG motif; it reads GGGIRG. Positions 784 to 788 match the GXSXG motif; the sequence is GTSTG. The Nucleophile role is filled by S786. The active-site Proton acceptor is the D908. The DGA/G signature appears at 908-910; it reads DGG.

This sequence belongs to the patatin family.

It carries out the reaction a 1,2-diacyl-sn-glycero-3-phosphocholine + H2O = a 1-acyl-sn-glycero-3-phosphocholine + a fatty acid + H(+). Functionally, phospholipase that plays a critical role during oogenesis, ovulation, and/or embryogenesis. This is Intracellular phospholipase A2 from Caenorhabditis elegans.